We begin with the raw amino-acid sequence, 427 residues long: Chaperone SurA (427 aa).

An N-terminal signal peptide occupies residues 1–13 (MLGVALLSGAVHA). 2 PpiC domains span residues 164–265 (SEEY…KLEE) and 275–374 (RDEV…EVLG).

The protein localises to the periplasm. The catalysed reaction is [protein]-peptidylproline (omega=180) = [protein]-peptidylproline (omega=0). Chaperone involved in the correct folding and assembly of outer membrane proteins. Recognizes specific patterns of aromatic residues and the orientation of their side chains, which are found more frequently in integral outer membrane proteins. May act in both early periplasmic and late outer membrane-associated steps of protein maturation. This is Chaperone SurA from Pseudomonas putida (strain ATCC 47054 / DSM 6125 / CFBP 8728 / NCIMB 11950 / KT2440).